We begin with the raw amino-acid sequence, 127 residues long: MPFVQIHLRSGRSEVWLQKLSRTIHQSMIEEINVPEDDYFQVIRQYEKSEFFYDPFYLQVERTDELIYIHFTLKQSRTTEQKKALYRSIASRIHSELGVRKEDVFIMLAGNQDEDWSFGNGRAQMIE.

The Proton acceptor; via imino nitrogen role is filled by Pro-2.

This sequence belongs to the 4-oxalocrotonate tautomerase family.

The chain is Probable tautomerase YusQ (yusQ) from Bacillus subtilis (strain 168).